We begin with the raw amino-acid sequence, 633 residues long: MRLSTAQLIAIAYYMLSIGATVPQVDGQGETEEALIQKRSYDYYQEPCDDYPQQQQQQEPCDYPQQQQQEEPCDYPQQQPQEPCDYPQQPQEPCDYPQQPQEPCDYPQQPQEPCDNPPQPDVPCDNPPQPDVPCDNPPQPDIPCDNPPQPDIPCDNPPQPDQPDDNPPIPNIPTDWIPNIPTDWIPDIPEKPTTPATTPNIPATTTTSESSSSSSSSSSTTPKTSASTTPESSVPATTPNTSVPTTSSESTTPATSPESSVPVTSGSSILTTTSESSSAPATTPNTSVPTTTTEAKSSSTPLTTTTEHDTTVVTVTSCSNSVCTESEVTTGVIVITSKDTIYTTYCPLTETTPVSTAPATETPTGTVSTSTEQSTTVITVTSCSESSCTESEVTTGVVVVTSEETVYTTFCPLTENTPGTDSTPEASIPPMETIPAGSEPSMPAGETSPAVPKPEVPATESAPVPEMTPAGSQPSMPAGETSPAVPKSDVSATESAPAPEMTPAGTETKPAAPKSSAPATEPSPVAPGTESAPAGPGASSSPKSSVLASETSPIAPGAETAPAGSSGAITIPESSAVVSTTEGAIPTTLESVPLMQPSANYSSVAPISTFEGAGNNMRLTFGAAIIGIAAFLI.

The signal sequence occupies residues 1–27 (MRLSTAQLIAIAYYMLSIGATVPQVDG). Disordered stretches follow at residues 40-306 (SYDY…TTTT) and 411-569 (CPLT…SGAI). Over residues 42-114 (DYYQEPCDDY…DYPQQPQEPC (73 aa)) the composition is skewed to low complexity. The stretch at 46-58 (EPCDDYPQQQQQQ) is one 1; approximate repeat. Residues 46-187 (EPCDDYPQQQ…PNIPTDWIPD (142 aa)) are 14 X 10 AA tandem repeats of [EVIQ]-P-[CDT]-D-[YNW]-P-[PQ]-[QI]-[QP]-[QDN]. One copy of the 2; approximate repeat lies at 59 to 69 (EPCDYPQQQQQ). One copy of the 3; approximate repeat lies at 70-81 (EEPCDYPQQQPQ). A run of 9 repeats spans residues 82-91 (EPCDYPQQPQ), 92-101 (EPCDYPQQPQ), 102-111 (EPCDYPQQPQ), 112-121 (EPCDNPPQPD), 122-131 (VPCDNPPQPD), 132-141 (VPCDNPPQPD), 142-151 (IPCDNPPQPD), 152-161 (IPCDNPPQPD), and 162-171 (QPDDNPPIPN). Over residues 115-171 (DNPPQPDVPCDNPPQPDVPCDNPPQPDIPCDNPPQPDIPCDNPPQPDQPDDNPPIPN) the composition is skewed to pro residues. The 13; truncated repeat unit spans residues 172–179 (IPTDWIPN). Composition is skewed to low complexity over residues 172 to 183 (IPTDWIPNIPTD) and 193 to 306 (TTPA…TTTT). Residues 180-187 (IPTDWIPD) form a 14; truncated repeat. Residues N240 and N285 are each glycosylated (N-linked (GlcNAc...) asparagine). A compositionally biased stretch (polar residues) spans 414–425 (TENTPGTDSTPE). The span at 507–549 (ETKPAAPKSSAPATEPSPVAPGTESAPAGPGASSSPKSSVLAS) shows a compositional bias: low complexity. Residue N600 is glycosylated (N-linked (GlcNAc...) asparagine). The GPI-anchor amidated glycine moiety is linked to residue G612. A propeptide spans 613-633 (AGNNMRLTFGAAIIGIAAFLI) (removed in mature form).

It belongs to the HWP1 family. In terms of processing, the GPI-anchor is attached to the protein in the endoplasmic reticulum and serves to target the protein to the cell surface. There, the glucosamine-inositol phospholipid moiety is cleaved off and the GPI-modified mannoprotein is covalently attached via its lipidless GPI glycan remnant to the 1,6-beta-glucan of the outer cell wall layer. N- and O-glycosylated.

Its subcellular location is the secreted. The protein resides in the cell wall. It localises to the membrane. Functionally, major hyphal cell wall protein which plays a role of adhesin and is required for mating, normal hyphal development, cell-to-cell adhesive functions necessary for biofilm integrity, attachment to host, and virulence. Promotes interactions with host and bacterial molecules, thus leading to effective colonization within polymicrobial communities. Plays a crucial role in gastrointestinal colonization, in mucosal symptomatic and asymptomatic infections, in vaginitis, as well as in lethal oroesophageal candidiasis, caused by the combined action of fungal virulence factors and host inflammatory responses when protective immunity is absent. This is Hyphal wall protein 1 from Candida albicans (strain WO-1) (Yeast).